The following is a 370-amino-acid chain: L-lysine 4-hydroxylase (370 aa).

Fe cation is bound by residues His176, Glu178, and His310.

Belongs to the clavaminate synthase family. It depends on Fe(2+) as a cofactor.

The enzyme catalyses L-lysine + 2-oxoglutarate + O2 = (4R)-4-hydroxy-L-lysine + succinate + CO2. Its function is as follows. Alpha-ketoglutarate-dependent dioxygenase that in vitro catalyzes the regio- and stereoselective hydroxylation of L-lysine, leading to (4R)-4-hydroxy-L-lysine. To a lesser extent, can also use (3S)-3-hydroxy-L-lysine as substrate, producing the dihydroxylated product (3R,4R)-3,4-hydroxy-L-lysine. Cannot use D-lysine or L-ornithine as substrate. The chain is L-lysine 4-hydroxylase from Flavobacterium johnsoniae (strain ATCC 17061 / DSM 2064 / JCM 8514 / BCRC 14874 / CCUG 350202 / NBRC 14942 / NCIMB 11054 / UW101) (Cytophaga johnsonae).